The sequence spans 159 residues: SsrA-binding protein (159 aa).

The tract at residues 133–159 (KKLHDKRETSKERDWNRQKNRLLKERG) is disordered. Positions 137–159 (DKRETSKERDWNRQKNRLLKERG) are enriched in basic and acidic residues.

This sequence belongs to the SmpB family.

It localises to the cytoplasm. In terms of biological role, required for rescue of stalled ribosomes mediated by trans-translation. Binds to transfer-messenger RNA (tmRNA), required for stable association of tmRNA with ribosomes. tmRNA and SmpB together mimic tRNA shape, replacing the anticodon stem-loop with SmpB. tmRNA is encoded by the ssrA gene; the 2 termini fold to resemble tRNA(Ala) and it encodes a 'tag peptide', a short internal open reading frame. During trans-translation Ala-aminoacylated tmRNA acts like a tRNA, entering the A-site of stalled ribosomes, displacing the stalled mRNA. The ribosome then switches to translate the ORF on the tmRNA; the nascent peptide is terminated with the 'tag peptide' encoded by the tmRNA and targeted for degradation. The ribosome is freed to recommence translation, which seems to be the essential function of trans-translation. In Sinorhizobium medicae (strain WSM419) (Ensifer medicae), this protein is SsrA-binding protein.